Consider the following 276-residue polypeptide: Putative serine/threonine-protein kinase R436 (276 aa).

One can recognise a Protein kinase domain in the interval 6–266 (YSLDKLIQNR…IKQKLNHFKT (261 aa)). Residues 12-20 (IQNRKSKRI) and K35 contribute to the ATP site. D132 acts as the Proton acceptor in catalysis.

It belongs to the protein kinase superfamily. Ser/Thr protein kinase family.

The catalysed reaction is L-seryl-[protein] + ATP = O-phospho-L-seryl-[protein] + ADP + H(+). The enzyme catalyses L-threonyl-[protein] + ATP = O-phospho-L-threonyl-[protein] + ADP + H(+). In Acanthamoeba polyphaga (Amoeba), this protein is Putative serine/threonine-protein kinase R436.